We begin with the raw amino-acid sequence, 317 residues long: Olfactory receptor 5K17 (317 aa).

The Extracellular portion of the chain corresponds to 1–28; sequence MMKANHSLTVEFILIGFSDHTDLKTLLF. Asn5 carries an N-linked (GlcNAc...) asparagine glycan. A helical membrane pass occupies residues 29 to 49; sequence LLFSAIYLVTIVGNLGLVALI. Topologically, residues 50–56 are cytoplasmic; that stretch reads YMEPRLH. The chain crosses the membrane as a helical span at residues 57–77; sequence TPMYIFLGNLALMDSCCSCAI. At 78–93 the chain is on the extracellular side; it reads TPKMLENFFSVDRRIS. The chain crosses the membrane as a helical span at residues 94–114; the sequence is LYECMVQFYFLCLAETADCFL. The cysteines at positions 97 and 189 are disulfide-linked. Residues 115–144 lie on the Cytoplasmic side of the membrane; that stretch reads LAAMAYDRYVAICNPLQYHTMMSKKLSIQM. A helical membrane pass occupies residues 145–165; the sequence is SIGTFIASNLHSLIHTGCLLR. The Extracellular portion of the chain corresponds to 166–198; it reads LNFCKSRRIDHFFCDILPLYKLSCTDPFINELM. A helical transmembrane segment spans residues 199–219; sequence LYIFSMPIQVFTITTVLVSYS. Residues 220–239 are Cytoplasmic-facing; sequence CILLTVFKMKSKDGRGKAFS. A helical transmembrane segment spans residues 240–259; that stretch reads TCASHFFSVSIFYICLLMYI. The Extracellular segment spans residues 260 to 268; that stretch reads GPSKNSNKD. Residues 269-289 traverse the membrane as a helical segment; sequence IPVGVFYTIVIPLLNPFIYSL. Over 290 to 317 the chain is Cytoplasmic; that stretch reads RNKEVVNAVKKVMKTHSIFKNSSASIAH.

This sequence belongs to the G-protein coupled receptor 1 family.

It is found in the cell membrane. Its function is as follows. Potential odorant receptor. The chain is Olfactory receptor 5K17 from Mus musculus (Mouse).